Here is a 692-residue protein sequence, read N- to C-terminus: Catalase-B (692 aa).

Catalysis depends on residues His-69 and Asn-142. Heme is bound at residue Tyr-356.

The protein belongs to the catalase family. Requires heme as cofactor.

The protein resides in the cytoplasm. It catalyses the reaction 2 H2O2 = O2 + 2 H2O. Occurs in almost all aerobically respiring organisms and serves to protect cells from the toxic effects of hydrogen peroxide. Its accumulation in prespore cells affords the spores protection from oxidation during prolonged dormancy. Required for normal developmental timing, possibly through a regulatory role in differentiation and morphogenesis. The chain is Catalase-B (catB) from Dictyostelium discoideum (Social amoeba).